Reading from the N-terminus, the 814-residue chain is DNA ligase (814 aa).

Residues 46 to 50, 95 to 96, and Glu-129 contribute to the NAD(+) site; these read DAEYD and SL. Lys-131 functions as the N6-AMP-lysine intermediate in the catalytic mechanism. NAD(+) is bound by residues Arg-152, Glu-189, Lys-305, and Lys-329. Residues Cys-434, Cys-437, Cys-458, and Cys-464 each contribute to the Zn(2+) site. The tract at residues 526-549 is disordered; it reads SAQRRTEGEPAPKKPTKKKGEEED. Positions 735–814 constitute a BRCT domain; the sequence is TSAAAFAGKT…DDWLAMLAEA (80 aa).

Belongs to the NAD-dependent DNA ligase family. LigA subfamily. Mg(2+) serves as cofactor. The cofactor is Mn(2+).

The catalysed reaction is NAD(+) + (deoxyribonucleotide)n-3'-hydroxyl + 5'-phospho-(deoxyribonucleotide)m = (deoxyribonucleotide)n+m + AMP + beta-nicotinamide D-nucleotide.. In terms of biological role, DNA ligase that catalyzes the formation of phosphodiester linkages between 5'-phosphoryl and 3'-hydroxyl groups in double-stranded DNA using NAD as a coenzyme and as the energy source for the reaction. It is essential for DNA replication and repair of damaged DNA. This is DNA ligase from Methylorubrum extorquens (strain CM4 / NCIMB 13688) (Methylobacterium extorquens).